The primary structure comprises 637 residues: Threonine--tRNA ligase (637 aa).

The 61-residue stretch at 1–61 (MLNITLPDGS…TEDSSVQIIT (61 aa)) folds into the TGS domain. The segment at 242-533 (DHRKLGKQLD…LIENHAGSFP (292 aa)) is catalytic. Residues Cys333, His384, and His510 each coordinate Zn(2+).

Belongs to the class-II aminoacyl-tRNA synthetase family. Homodimer. Requires Zn(2+) as cofactor.

Its subcellular location is the cytoplasm. It catalyses the reaction tRNA(Thr) + L-threonine + ATP = L-threonyl-tRNA(Thr) + AMP + diphosphate + H(+). In terms of biological role, catalyzes the attachment of threonine to tRNA(Thr) in a two-step reaction: L-threonine is first activated by ATP to form Thr-AMP and then transferred to the acceptor end of tRNA(Thr). Also edits incorrectly charged L-seryl-tRNA(Thr). This chain is Threonine--tRNA ligase, found in Neisseria meningitidis serogroup C (strain 053442).